Here is a 396-residue protein sequence, read N- to C-terminus: Multidrug efflux protein YfmO (396 aa).

Helical transmembrane passes span 20–40 (VWAV…VDPI), 56–76 (SLLF…SGAI), 80–100 (IGAK…AGLG), 114–134 (GGWG…IVGV), 142–162 (AIIL…LAGG), 171–191 (APFF…SFML), 214–234 (GLLT…ILLA), 249–269 (YVFF…APLV), 278–298 (SLVV…IWTD), 301–321 (TLII…NTIM), 339–359 (AYSS…GMLS), and 364–384 (ASTP…VLLM).

Belongs to the major facilitator superfamily.

The protein localises to the cell membrane. In terms of biological role, acts to efflux copper or a copper complex. It is possible that YfmO could contribute to copper resistance. This Bacillus subtilis (strain 168) protein is Multidrug efflux protein YfmO (yfmO).